Here is a 56-residue protein sequence, read N- to C-terminus: Large ribosomal subunit protein bL32c (56 aa).

Belongs to the bacterial ribosomal protein bL32 family.

It is found in the plastid. It localises to the chloroplast. The chain is Large ribosomal subunit protein bL32c from Platanus occidentalis (Sycamore).